The chain runs to 877 residues: Alanine--tRNA ligase (877 aa).

His567, His571, Cys669, and His673 together coordinate Zn(2+).

This sequence belongs to the class-II aminoacyl-tRNA synthetase family. Requires Zn(2+) as cofactor.

Its subcellular location is the cytoplasm. The catalysed reaction is tRNA(Ala) + L-alanine + ATP = L-alanyl-tRNA(Ala) + AMP + diphosphate. In terms of biological role, catalyzes the attachment of alanine to tRNA(Ala) in a two-step reaction: alanine is first activated by ATP to form Ala-AMP and then transferred to the acceptor end of tRNA(Ala). Also edits incorrectly charged Ser-tRNA(Ala) and Gly-tRNA(Ala) via its editing domain. The protein is Alanine--tRNA ligase of Lactobacillus delbrueckii subsp. bulgaricus (strain ATCC 11842 / DSM 20081 / BCRC 10696 / JCM 1002 / NBRC 13953 / NCIMB 11778 / NCTC 12712 / WDCM 00102 / Lb 14).